The following is a 399-amino-acid chain: 4-hydroxy-3-methylbut-2-enyl diphosphate reductase (399 aa).

Residue C66 participates in [4Fe-4S] cluster binding. H96 contributes to the (2E)-4-hydroxy-3-methylbut-2-enyl diphosphate binding site. Residue H96 participates in dimethylallyl diphosphate binding. H96 serves as a coordination point for isopentenyl diphosphate. C157 contributes to the [4Fe-4S] cluster binding site. H185 serves as a coordination point for (2E)-4-hydroxy-3-methylbut-2-enyl diphosphate. H185 is a dimethylallyl diphosphate binding site. Isopentenyl diphosphate is bound at residue H185. E187 serves as the catalytic Proton donor. T250 is a binding site for (2E)-4-hydroxy-3-methylbut-2-enyl diphosphate. C288 contributes to the [4Fe-4S] cluster binding site. Positions 317, 318, 319, and 380 each coordinate (2E)-4-hydroxy-3-methylbut-2-enyl diphosphate. Residues S317, S318, N319, and S380 each contribute to the dimethylallyl diphosphate site. The isopentenyl diphosphate site is built by S317, S318, N319, and S380.

The protein belongs to the IspH family. The cofactor is [4Fe-4S] cluster.

The enzyme catalyses isopentenyl diphosphate + 2 oxidized [2Fe-2S]-[ferredoxin] + H2O = (2E)-4-hydroxy-3-methylbut-2-enyl diphosphate + 2 reduced [2Fe-2S]-[ferredoxin] + 2 H(+). It catalyses the reaction dimethylallyl diphosphate + 2 oxidized [2Fe-2S]-[ferredoxin] + H2O = (2E)-4-hydroxy-3-methylbut-2-enyl diphosphate + 2 reduced [2Fe-2S]-[ferredoxin] + 2 H(+). It participates in isoprenoid biosynthesis; dimethylallyl diphosphate biosynthesis; dimethylallyl diphosphate from (2E)-4-hydroxy-3-methylbutenyl diphosphate: step 1/1. It functions in the pathway isoprenoid biosynthesis; isopentenyl diphosphate biosynthesis via DXP pathway; isopentenyl diphosphate from 1-deoxy-D-xylulose 5-phosphate: step 6/6. Functionally, catalyzes the conversion of 1-hydroxy-2-methyl-2-(E)-butenyl 4-diphosphate (HMBPP) into a mixture of isopentenyl diphosphate (IPP) and dimethylallyl diphosphate (DMAPP). Acts in the terminal step of the DOXP/MEP pathway for isoprenoid precursor biosynthesis. This Synechococcus sp. (strain CC9605) protein is 4-hydroxy-3-methylbut-2-enyl diphosphate reductase.